Here is a 506-residue protein sequence, read N- to C-terminus: Pyruvate kinase 2 (506 aa).

Ser-24 is modified (phosphoserine). Arg-51 provides a ligand contact to substrate. K(+) is bound by residues Asn-53, Ser-55, Asp-86, and Thr-87. 53–56 lines the ATP pocket; it reads NFSH. ATP contacts are provided by Arg-93 and Lys-179. Glu-244 is a binding site for Mg(2+). Substrate-binding residues include Gly-267, Asp-268, and Thr-300. A Mg(2+)-binding site is contributed by Asp-268.

It belongs to the pyruvate kinase family. As to quaternary structure, homotetramer. The cofactor is Mg(2+). It depends on K(+) as a cofactor.

The catalysed reaction is pyruvate + ATP = phosphoenolpyruvate + ADP + H(+). The protein operates within carbohydrate degradation; glycolysis; pyruvate from D-glyceraldehyde 3-phosphate: step 5/5. Not activated by fructose-1,6-bisphosphate. Functionally, may be used by cells under conditions in which the level of glycolytic flux is very low. The chain is Pyruvate kinase 2 (PYK2) from Saccharomyces cerevisiae (strain ATCC 204508 / S288c) (Baker's yeast).